The following is a 195-amino-acid chain: Magnetosome membrane protein 22 (195 aa).

Residues 1–28 show a composition bias toward low complexity; that stretch reads MAAQTAASEAPAPAAAPADSPTTAGPTP. Positions 1 to 31 are disordered; the sequence is MAAQTAASEAPAPAAAPADSPTTAGPTPDSV. 3 helical membrane passes run 45 to 65, 90 to 110, and 115 to 135; these read VLAA…AAVV, SVIA…AVAV, and LIPG…AGAT.

Its subcellular location is the magnetosome membrane. The polypeptide is Magnetosome membrane protein 22 (Magnetospirillum gryphiswaldense (strain DSM 6361 / JCM 21280 / NBRC 15271 / MSR-1)).